We begin with the raw amino-acid sequence, 250 residues long: Flavin-dependent thymidylate synthase (250 aa).

The 227-residue stretch at 7–233 folds into the ThyX domain; it reads LRVQLIAKTE…PAVFADFEVT (227 aa). DUMP is bound by residues 92–95, 103–107, and arginine 172; these read ELIR and QLSQR. Residues 95 to 97 and glutamine 103 each bind FAD; that span reads RHR. Residues 95–105 carry the ThyX motif motif; sequence RHRHFSYSQLS. Residues 188-190 and histidine 194 contribute to the FAD site; that span reads NYR. Arginine 199 lines the dUMP pocket. Catalysis depends on arginine 199, which acts as the Involved in ionization of N3 of dUMP, leading to its activation.

It belongs to the thymidylate synthase ThyX family. As to quaternary structure, homotetramer. Requires FAD as cofactor.

The catalysed reaction is dUMP + (6R)-5,10-methylene-5,6,7,8-tetrahydrofolate + NADPH + H(+) = dTMP + (6S)-5,6,7,8-tetrahydrofolate + NADP(+). The protein operates within pyrimidine metabolism; dTTP biosynthesis. Catalyzes the reductive methylation of 2'-deoxyuridine-5'-monophosphate (dUMP) to 2'-deoxythymidine-5'-monophosphate (dTMP) while utilizing 5,10-methylenetetrahydrofolate (mTHF) as the methyl donor, and NADPH and FADH(2) as the reductant. The sequence is that of Flavin-dependent thymidylate synthase from Mycobacterium marinum (strain ATCC BAA-535 / M).